A 412-amino-acid chain; its full sequence is N-carbamoyl-L-amino-acid amidohydrolase (412 aa).

A divalent metal cation contacts are provided by His82, Asp93, Glu128, and His193. 5 residues coordinate an N-carbamoyl-L-alpha-amino acid: Gln196, His229, Asn278, Arg291, and Gly360. The segment at 212-330 (SIVGVRALRV…DVDEFFNLSP (119 aa)) is involved in dimerization. His385 lines the a divalent metal cation pocket.

Belongs to the peptidase M20 family. As to quaternary structure, homodimer. Mn(2+) is required as a cofactor. Ni(2+) serves as cofactor. Requires Co(2+) as cofactor. The cofactor is Fe(2+).

The enzyme catalyses an N-carbamoyl-L-alpha-amino acid + H2O + 2 H(+) = an L-alpha-amino acid + NH4(+) + CO2. It carries out the reaction N-carbamoyl-L-tryptophan + H2O + 2 H(+) = L-tryptophan + NH4(+) + CO2. It catalyses the reaction N-carbamoyl-L-tyrosine + H2O + 2 H(+) = L-tyrosine + NH4(+) + CO2. The catalysed reaction is N-carbamoyl-L-phenylalanine + H2O + 2 H(+) = L-phenylalanine + NH4(+) + CO2. Functionally, catalyzes the hydrolysis of aliphatic N-carbamoyl-L-alpha-amino acids to free L-alpha-amino acids. Is strictly L-specific since it is inactive toward N-carbamoyl-D-alpha-amino acids. Shows a preference for aromatic N-carbamoyl-L-alpha-amino acids, such as N-carbamoyl-L-tryptophan and N-carbamoyl-L-tyrosine and, to a lesser extent, N-carbamoyl-L-phenylalanine and the non-natural amino acid N-carbamoyl-L-thienylalanine. Carbamoyl derivatives of beta-alanine and charged aliphatic amino acids are not accepted as substrates. The polypeptide is N-carbamoyl-L-amino-acid amidohydrolase (Paenarthrobacter aurescens (Arthrobacter aurescens)).